We begin with the raw amino-acid sequence, 399 residues long: Probable protein phosphatase 2C 28 (399 aa).

Residues 48–356 (EFSMAVVQAN…DDITVIVVFL (309 aa)) enclose the PPM-type phosphatase domain. Residues Asp87, Gly88, Asp288, and Asp347 each coordinate Mn(2+).

Belongs to the PP2C family. Mg(2+) is required as a cofactor. The cofactor is Mn(2+).

It catalyses the reaction O-phospho-L-seryl-[protein] + H2O = L-seryl-[protein] + phosphate. The enzyme catalyses O-phospho-L-threonyl-[protein] + H2O = L-threonyl-[protein] + phosphate. This Oryza sativa subsp. japonica (Rice) protein is Probable protein phosphatase 2C 28.